Reading from the N-terminus, the 245-residue chain is Ninjurin-A (245 aa).

Topologically, residues 1–170 (MSNLEHITLE…TSSQHPYFYP (170 aa)) are extracellular. Residues N19 and N28 are each glycosylated (N-linked (GlcNAc...) asparagine). Residues 32–101 (HSYGGAIDGR…NVNVNVPNGG (70 aa)) form a disordered region. Low complexity predominate over residues 92-101 (NVNVNVPNGG). Residues 135-146 (KKTLAQGMMDLA) are helix alpha1. The interval 149–165 (SANANQLRYVLETSSQH) is helix alpha2. Residues 171–191 (SLLFISLSIIFQIAVGVGLIL) form a helical membrane-spanning segment. At 192–211 (NGQYNIKNGHDICRANRINN) the chain is on the cytoplasmic side. Residues 212-232 (YTVSGIFIVTVVNVLISAFTV) form a helical membrane-spanning segment. Residues 233-245 (DRDTVPALPANTT) are Extracellular-facing.

The protein belongs to the ninjurin family. As to quaternary structure, homooligomer. Cleaved by Mmp1 protease to generate the Secreted ninjurin-A form.

The protein resides in the cell membrane. Its subcellular location is the secreted. Its function is as follows. Effector of non-apoptotic necrotic cell death that mediates plasma membrane rupture (cytolysis): oligomerizes in response to death stimuli and promotes plasma membrane rupture by introducing hydrophilic faces of 2 alpha helices into the hydrophobic membrane, leading to release intracellular molecules that propagate the inflammatory response. Also acts as a homophilic transmembrane adhesion molecule that promotes cell adhesion by mediating homophilic interactions via its extracellular region. Functionally, secreted form generated by cleavage, which acts as a negative regulator of cell adhesion. Promotes the loss of cell adhesion in a cell non-autonomous manner. The sequence is that of Ninjurin-A from Drosophila melanogaster (Fruit fly).